Reading from the N-terminus, the 511-residue chain is 2-isopropylmalate synthase (511 aa).

In terms of domain architecture, Pyruvate carboxyltransferase spans 5 to 267 (LIIFDTTLRD…DTDINATHIL (263 aa)). Residues Asp-14, His-202, His-204, and Asn-238 each coordinate Mn(2+). The segment at 392–511 (KLVSLKVCTE…ATNKAQHPQI (120 aa)) is regulatory domain.

The protein belongs to the alpha-IPM synthase/homocitrate synthase family. LeuA type 1 subfamily. As to quaternary structure, homodimer. Mn(2+) is required as a cofactor.

It localises to the cytoplasm. It catalyses the reaction 3-methyl-2-oxobutanoate + acetyl-CoA + H2O = (2S)-2-isopropylmalate + CoA + H(+). It functions in the pathway amino-acid biosynthesis; L-leucine biosynthesis; L-leucine from 3-methyl-2-oxobutanoate: step 1/4. In terms of biological role, catalyzes the condensation of the acetyl group of acetyl-CoA with 3-methyl-2-oxobutanoate (2-ketoisovalerate) to form 3-carboxy-3-hydroxy-4-methylpentanoate (2-isopropylmalate). In Ruthia magnifica subsp. Calyptogena magnifica, this protein is 2-isopropylmalate synthase.